We begin with the raw amino-acid sequence, 183 residues long: ATP-dependent protease subunit HslV (183 aa).

The active site involves Thr2. The Na(+) site is built by Gly157, Cys160, and Thr163.

The protein belongs to the peptidase T1B family. HslV subfamily. As to quaternary structure, a double ring-shaped homohexamer of HslV is capped on each side by a ring-shaped HslU homohexamer. The assembly of the HslU/HslV complex is dependent on binding of ATP.

Its subcellular location is the cytoplasm. It catalyses the reaction ATP-dependent cleavage of peptide bonds with broad specificity.. With respect to regulation, allosterically activated by HslU binding. In terms of biological role, protease subunit of a proteasome-like degradation complex believed to be a general protein degrading machinery. In Vibrio parahaemolyticus serotype O3:K6 (strain RIMD 2210633), this protein is ATP-dependent protease subunit HslV.